A 20-amino-acid polypeptide reads, in one-letter code: Transcriptional regulatory protein PufK (20 aa).

Basic residues predominate over residues 1–11; the sequence is MVPYRNPRHQH. The interval 1–20 is disordered; the sequence is MVPYRNPRHQHVASVLRSGG.

In terms of biological role, involved in the transcriptional regulation of pufB. The chain is Transcriptional regulatory protein PufK (pufK) from Cereibacter sphaeroides (strain ATCC 17023 / DSM 158 / JCM 6121 / CCUG 31486 / LMG 2827 / NBRC 12203 / NCIMB 8253 / ATH 2.4.1.) (Rhodobacter sphaeroides).